The primary structure comprises 430 residues: Serine hydroxymethyltransferase (430 aa).

Residues Leu123 and 127 to 129 (GHL) contribute to the (6S)-5,6,7,8-tetrahydrofolate site. Residue Lys232 is modified to N6-(pyridoxal phosphate)lysine. Glu248 is a (6S)-5,6,7,8-tetrahydrofolate binding site.

It belongs to the SHMT family. In terms of assembly, homodimer. It depends on pyridoxal 5'-phosphate as a cofactor.

The protein resides in the cytoplasm. It carries out the reaction (6R)-5,10-methylene-5,6,7,8-tetrahydrofolate + glycine + H2O = (6S)-5,6,7,8-tetrahydrofolate + L-serine. The protein operates within one-carbon metabolism; tetrahydrofolate interconversion. It functions in the pathway amino-acid biosynthesis; glycine biosynthesis; glycine from L-serine: step 1/1. Functionally, catalyzes the reversible interconversion of serine and glycine with tetrahydrofolate (THF) serving as the one-carbon carrier. This reaction serves as the major source of one-carbon groups required for the biosynthesis of purines, thymidylate, methionine, and other important biomolecules. Also exhibits THF-independent aldolase activity toward beta-hydroxyamino acids, producing glycine and aldehydes, via a retro-aldol mechanism. This Anaplasma marginale (strain Florida) protein is Serine hydroxymethyltransferase.